A 375-amino-acid chain; its full sequence is MKFELDTTDGRARRGRLVFDRGVVETPAFMPVGTYGTVKGMTPEEVEATGAQIILGNTFHLWLRPGQEIMKLHGDLHDFMQWKGPILTDSGGFQVFSLGDIRKITEQGVHFRNPINGDPIFLDPEKSMEIQYDLGSDIVMIFDECTPYPADWDYAKRSMEMSLRWAKRSRDRFDSLGNKNALFGIIQGSVYEDLRDISVKGLVEIGFDGYAVGGLAVGEPKADMHRILEHVCPQIPADKPRYLMGVGKPEDLVEGVRRGIDMFDCVMPTRNARNGHLFVTDGVVKIRNAKHKSDISPLDAECDCYTCRNYSRAYLHHLDRCNEILGARLNTIHNLRYYQRLMAGLRKAIEEGKLESFVTEFYQRQGRPVPPLNVD.

Catalysis depends on Asp-89, which acts as the Proton acceptor. Residues 89 to 93, Asp-143, Gln-187, and Gly-214 each bind substrate; that span reads DSGGF. Positions 245–251 are RNA binding; that stretch reads GVGKPED. Catalysis depends on Asp-264, which acts as the Nucleophile. The segment at 269–273 is RNA binding; important for wobble base 34 recognition; sequence TRNAR. Residues Cys-302, Cys-304, Cys-307, and His-333 each contribute to the Zn(2+) site.

This sequence belongs to the queuine tRNA-ribosyltransferase family. As to quaternary structure, homodimer. Within each dimer, one monomer is responsible for RNA recognition and catalysis, while the other monomer binds to the replacement base PreQ1. Zn(2+) is required as a cofactor.

The catalysed reaction is 7-aminomethyl-7-carbaguanine + guanosine(34) in tRNA = 7-aminomethyl-7-carbaguanosine(34) in tRNA + guanine. Its pathway is tRNA modification; tRNA-queuosine biosynthesis. Functionally, catalyzes the base-exchange of a guanine (G) residue with the queuine precursor 7-aminomethyl-7-deazaguanine (PreQ1) at position 34 (anticodon wobble position) in tRNAs with GU(N) anticodons (tRNA-Asp, -Asn, -His and -Tyr). Catalysis occurs through a double-displacement mechanism. The nucleophile active site attacks the C1' of nucleotide 34 to detach the guanine base from the RNA, forming a covalent enzyme-RNA intermediate. The proton acceptor active site deprotonates the incoming PreQ1, allowing a nucleophilic attack on the C1' of the ribose to form the product. After dissociation, two additional enzymatic reactions on the tRNA convert PreQ1 to queuine (Q), resulting in the hypermodified nucleoside queuosine (7-(((4,5-cis-dihydroxy-2-cyclopenten-1-yl)amino)methyl)-7-deazaguanosine). The sequence is that of Queuine tRNA-ribosyltransferase from Salmonella typhi.